Reading from the N-terminus, the 445-residue chain is Mitochondrial enolase superfamily member 1 (445 aa).

Residues 24–26 (GSD), tyrosine 34, and lysine 220 contribute to the substrate site. Lysine 222 acts as the Proton donor/acceptor in catalysis. Aspartate 250 lines the Mg(2+) pocket. Residues asparagine 252, glutamate 276, glutamate 305, 355-357 (HAG), and glutamate 386 contribute to the substrate site. Mg(2+) is bound by residues glutamate 276 and glutamate 305. Histidine 355 is a catalytic residue.

This sequence belongs to the mandelate racemase/muconate lactonizing enzyme family. ENOSF1 subfamily. The cofactor is Mg(2+).

The protein localises to the mitochondrion. It carries out the reaction L-fuconate = 2-dehydro-3-deoxy-L-fuconate + H2O. Plays a role in the catabolism of L-fucose, a sugar that is part of the carbohydrates that are attached to cellular glycoproteins. Catalyzes the dehydration of L-fuconate to 2-keto-3-deoxy-L-fuconate by the abstraction of the 2-proton to generate an enediolate intermediate that is stabilized by the magnesium ion. May down-regulate thymidylate synthase activity, possibly already at the RNA level, by promoting the degradation of TYMS mRNA via an antisense RNA-based mechanism. This chain is Mitochondrial enolase superfamily member 1 (enosf1), found in Xenopus laevis (African clawed frog).